Consider the following 214-residue polypeptide: Rac-like GTP-binding protein 2 (214 aa).

14-21 (GDGAVGKT) is a GTP binding site. The short motif at 36–44 (YIPTVFDNF) is the Effector region element. Residues 61-65 (DTAGQ) and 119-122 (TKLD) each bind GTP.

Belongs to the small GTPase superfamily. Rho family. May be palmitoylated.

It is found in the cytoplasm. It localises to the membrane. In terms of biological role, inactive GDP-bound Rho GTPases reside in the cytosol, are found in a complex with Rho GDP-dissociation inhibitors (Rho GDIs), and are released from the GDI protein in order to translocate to membranes upon activation. The polypeptide is Rac-like GTP-binding protein 2 (RAC2) (Oryza sativa subsp. japonica (Rice)).